A 365-amino-acid polypeptide reads, in one-letter code: UPF0324 membrane protein Cj0999c (365 aa).

11 helical membrane-spanning segments follow: residues 12–34 (IVRS…MYLS), 44–63 (HLAA…PWFF), 83–100 (LGIV…LLSV), 105–127 (FLLS…TKIF), 134–153 (SMLV…LALE), 163–185 (GILA…PIAF), 197–219 (AMGV…AEMA), 234–256 (VIIK…YFFA), 269–288 (SITI…LNTY), 303–325 (IISL…LGLQ), and 338–360 (VFGL…TLAF).

Belongs to the UPF0324 family.

The protein resides in the cell membrane. This chain is UPF0324 membrane protein Cj0999c, found in Campylobacter jejuni subsp. jejuni serotype O:2 (strain ATCC 700819 / NCTC 11168).